A 123-amino-acid polypeptide reads, in one-letter code: Cell division protein SepF (123 aa).

This sequence belongs to the SepF family. In terms of assembly, homodimer. Interacts with FtsZ.

The protein localises to the cytoplasm. Its function is as follows. Cell division protein that is part of the divisome complex and is recruited early to the Z-ring. Probably stimulates Z-ring formation, perhaps through the cross-linking of FtsZ protofilaments. Its function overlaps with FtsA. This Tropheryma whipplei (strain TW08/27) (Whipple's bacillus) protein is Cell division protein SepF.